We begin with the raw amino-acid sequence, 172 residues long: Putative defense protein (172 aa).

The first 21 residues, 1–21 (MKLVVAAVLAMAASRWRRLSA), serve as a signal peptide directing secretion. In terms of domain architecture, Reelin spans 22–172 (HGQVPSSTCA…LRQLDNAVAA (151 aa)).

The protein belongs to the insect defense protein family. As to expression, in adults, in hemolymph.

It localises to the secreted. Functionally, may have antimicrobial activity. The protein is Putative defense protein of Locusta migratoria (Migratory locust).